A 474-amino-acid polypeptide reads, in one-letter code: tRNA-2-methylthio-N(6)-dimethylallyladenosine synthase (474 aa).

The MTTase N-terminal domain maps to 3–120 (KKLHIKTWGC…LPEMINHVQG (118 aa)). [4Fe-4S] cluster contacts are provided by C12, C49, C83, C157, C161, and C164. A Radical SAM core domain is found at 143–375 (RADGPTAFVS…QDRITKQAMR (233 aa)). Positions 378–441 (RLMLGTVQRI…TNSLRGIVVR (64 aa)) constitute a TRAM domain.

This sequence belongs to the methylthiotransferase family. MiaB subfamily. As to quaternary structure, monomer. The cofactor is [4Fe-4S] cluster.

It is found in the cytoplasm. It carries out the reaction N(6)-dimethylallyladenosine(37) in tRNA + (sulfur carrier)-SH + AH2 + 2 S-adenosyl-L-methionine = 2-methylsulfanyl-N(6)-dimethylallyladenosine(37) in tRNA + (sulfur carrier)-H + 5'-deoxyadenosine + L-methionine + A + S-adenosyl-L-homocysteine + 2 H(+). Functionally, catalyzes the methylthiolation of N6-(dimethylallyl)adenosine (i(6)A), leading to the formation of 2-methylthio-N6-(dimethylallyl)adenosine (ms(2)i(6)A) at position 37 in tRNAs that read codons beginning with uridine. This is tRNA-2-methylthio-N(6)-dimethylallyladenosine synthase from Pectobacterium atrosepticum (strain SCRI 1043 / ATCC BAA-672) (Erwinia carotovora subsp. atroseptica).